Reading from the N-terminus, the 359-residue chain is Protein HEXIM1 (359 aa).

Residues 1–163 (MAEPFLSEYQ…RRRPSKKKRH (163 aa)) form a disordered region. Over residues 9–19 (YQHQPQTSNCT) the composition is skewed to polar residues. 2 stretches are compositionally biased toward basic and acidic residues: residues 34 to 47 (PGAE…DSRW) and 84 to 93 (CLREGEKGQN). A phosphoserine mark is found at S97 and S98. Over residues 148 to 163 (LGKKKHRRRPSKKKRH) the composition is skewed to basic residues. Residues 150–177 (KKKHRRRPSKKKRHWKPYYKLTWEEKKK) form a basic region; mediates nuclear localization and interaction with 7SK snRNA and NR3C1 region. Positions 202 to 205 (PYNT) are interaction with P-TEFb. Residues 210–250 (MDDHDQEEPDLKTGLYSKRAAAKSDDTSDDDFMEEGGEEDG) are autoinhibitory acidic region; in absence of 7SK snRNA interacts with the basic region preventing interaction with P-TEFb and modulating subcellular localization. The segment at 213-262 (HDQEEPDLKTGLYSKRAAAKSDDTSDDDFMEEGGEEDGGSDGMGGDGSEF) is disordered. The residue at position 233 (S233) is a Phosphoserine. T236 is subject to Phosphothreonine. Over residues 236-251 (TSDDDFMEEGGEEDGG) the composition is skewed to acidic residues. Phosphoserine occurs at positions 237, 252, and 260. Residues 283–349 (SKQELIKEYL…LTENELHRQQ (67 aa)) adopt a coiled-coil conformation. The interval 286 to 314 (ELIKEYLELEKCLSRMEDENNRLRLESKR) is mediates interaction with CCNT1. The tract at residues 310 to 355 (LESKRLGGDDARVRELELELDRLRAENLQLLTENELHRQQERAPLS) is required for inhibition of ESR1-dependent transcription.

It belongs to the HEXIM family. Homooligomer and heterooligomer with HEXIM2; probably dimeric. Core component of the 7SK RNP complex, at least composed of 7SK RNA, LARP7, MEPCE, HEXIM1 (or HEXIM2) and P-TEFb (composed of CDK9 and CCNT1/cyclin-T1). Interacts with the N-CoR complex through NCOR1. Interacts with ESR1 and NR3C1. May interact with NF-kappa-B through RELA. Interacts with CCNT2; mediates formation of a tripartite complex with KPNA2. Part of the HDP-RNP complex composed of at least HEXIM1, PRKDC, XRCC5, XRCC6, paraspeckle proteins (SFPQ, NONO, PSPC1, RBM14, and MATR3) and NEAT1 non-coding RNA. As to expression, ubiquitously expressed with higher expression in placenta. HEXIM1 and HEXIM2 are differentially expressed. Expressed in endocrine tissues.

The protein resides in the nucleus. It is found in the cytoplasm. Its function is as follows. Transcriptional regulator which functions as a general RNA polymerase II transcription inhibitor. Core component of the 7SK RNP complex: in cooperation with 7SK snRNA sequesters P-TEFb in a large inactive 7SK snRNP complex preventing RNA polymerase II phosphorylation and subsequent transcriptional elongation. May also regulate NF-kappa-B, ESR1, NR3C1 and CIITA-dependent transcriptional activity. Plays a role in the regulation of DNA virus-mediated innate immune response by assembling into the HDP-RNP complex, a complex that serves as a platform for IRF3 phosphorylation and subsequent innate immune response activation through the cGAS-STING pathway. This is Protein HEXIM1 (HEXIM1) from Homo sapiens (Human).